The following is a 245-amino-acid chain: 1-(5-phosphoribosyl)-5-[(5-phosphoribosylamino)methylideneamino] imidazole-4-carboxamide isomerase 1 (245 aa).

Aspartate 7 acts as the Proton acceptor in catalysis. Catalysis depends on aspartate 129, which acts as the Proton donor.

Belongs to the HisA/HisF family.

The protein resides in the cytoplasm. The catalysed reaction is 1-(5-phospho-beta-D-ribosyl)-5-[(5-phospho-beta-D-ribosylamino)methylideneamino]imidazole-4-carboxamide = 5-[(5-phospho-1-deoxy-D-ribulos-1-ylimino)methylamino]-1-(5-phospho-beta-D-ribosyl)imidazole-4-carboxamide. It functions in the pathway amino-acid biosynthesis; L-histidine biosynthesis; L-histidine from 5-phospho-alpha-D-ribose 1-diphosphate: step 4/9. The chain is 1-(5-phosphoribosyl)-5-[(5-phosphoribosylamino)methylideneamino] imidazole-4-carboxamide isomerase 1 (hisA1) from Photorhabdus laumondii subsp. laumondii (strain DSM 15139 / CIP 105565 / TT01) (Photorhabdus luminescens subsp. laumondii).